Reading from the N-terminus, the 368-residue chain is DNA replication and repair protein RecF (368 aa).

An ATP-binding site is contributed by 30 to 37 (GRNGQGKT).

It belongs to the RecF family.

The protein resides in the cytoplasm. Functionally, the RecF protein is involved in DNA metabolism; it is required for DNA replication and normal SOS inducibility. RecF binds preferentially to single-stranded, linear DNA. It also seems to bind ATP. In Trichlorobacter lovleyi (strain ATCC BAA-1151 / DSM 17278 / SZ) (Geobacter lovleyi), this protein is DNA replication and repair protein RecF.